Reading from the N-terminus, the 205-residue chain is Ribonuclease HII (205 aa).

Positions 14–205 constitute an RNase H type-2 domain; that stretch reads ERICGIDEAG…SFKVRRLNEA (192 aa). Residues D20, E21, and D117 each coordinate a divalent metal cation.

It belongs to the RNase HII family. The cofactor is Mn(2+). It depends on Mg(2+) as a cofactor.

It localises to the cytoplasm. The catalysed reaction is Endonucleolytic cleavage to 5'-phosphomonoester.. Endonuclease that specifically degrades the RNA of RNA-DNA hybrids. The chain is Ribonuclease HII from Chlorobium phaeovibrioides (strain DSM 265 / 1930) (Prosthecochloris vibrioformis (strain DSM 265)).